Here is a 437-residue protein sequence, read N- to C-terminus: Eukaryotic peptide chain release factor subunit 1 (437 aa).

A2 carries the N-acetylalanine modification. The NIKS motif; plays an important role in translational termination motif lies at 61–64 (NIKS). The residue at position 63 (K63) is a 4-hydroxylysine. Residue K87 forms a Glycyl lysine isopeptide (Lys-Gly) (interchain with G-Cter in SUMO2) linkage. Q185 carries the N5-methylglutamine modification. A Glycyl lysine isopeptide (Lys-Gly) (interchain with G-Cter in ubiquitin) cross-link involves residue K279. A Phosphothreonine modification is found at T347. K404 participates in a covalent cross-link: Glycyl lysine isopeptide (Lys-Gly) (interchain with G-Cter in SUMO2).

The protein belongs to the eukaryotic release factor 1 family. As to quaternary structure, component of the eRF1-eRF3-GTP ternary complex, composed of ETF1/ERF1 and eRF3 (GSPT1/ERF3A or GSPT2/ERF3B) and GTP. Component of the transient SURF (SMG1-UPF1-eRF1-eRF3) complex. Interacts with JMJD4. The ETF1-GSPT1 complex interacts with JMJD4. Post-translationally, hydroxylation at Lys-63 by JMJD4 promotes its translational termination efficiency. In terms of processing, methylated at Gln-185 by N6AMT1. Ubiquitinated at Lys-279 via 'Lys-6'-linked polyubiquitin chains by RNF14 and RNF25 in response to ribosome collisions (ribosome stalling), leading to its degradation by the proteasome and rescue of stalled ribosomes.

It is found in the cytoplasm. Component of the eRF1-eRF3-GTP ternary complex, a ternary complex that mediates translation termination in response to the termination codons. The eRF1-eRF3-GTP complex binds to a stop codon in the ribosomal A-site. ETF1/ERF1 is responsible for stop codon recognition and inducing hydrolysis of peptidyl-tRNA. Following GTP hydrolysis, eRF3 (GSPT1/ERF3A or GSPT2/ERF3B) dissociates, permitting ETF1/eRF1 to accommodate fully in the A-site, followed by hydrolysis of peptidyl-tRNA. Component of the transient SURF complex which recruits UPF1 to stalled ribosomes in the context of nonsense-mediated decay (NMD) of mRNAs containing premature stop codons. Required for SHFL-mediated translation termination which inhibits programmed ribosomal frameshifting (-1PRF) of mRNA from viruses and cellular genes. This Bos taurus (Bovine) protein is Eukaryotic peptide chain release factor subunit 1 (ETF1).